A 293-amino-acid chain; its full sequence is Putative phosphoenolpyruvate synthase regulatory protein (293 aa).

173–180 (GVSRCGKT) is a binding site for ADP.

It belongs to the pyruvate, phosphate/water dikinase regulatory protein family. PSRP subfamily.

The catalysed reaction is [pyruvate, water dikinase] + ADP = [pyruvate, water dikinase]-phosphate + AMP + H(+). It catalyses the reaction [pyruvate, water dikinase]-phosphate + phosphate + H(+) = [pyruvate, water dikinase] + diphosphate. In terms of biological role, bifunctional serine/threonine kinase and phosphorylase involved in the regulation of the phosphoenolpyruvate synthase (PEPS) by catalyzing its phosphorylation/dephosphorylation. This is Putative phosphoenolpyruvate synthase regulatory protein from Photorhabdus laumondii subsp. laumondii (strain DSM 15139 / CIP 105565 / TT01) (Photorhabdus luminescens subsp. laumondii).